We begin with the raw amino-acid sequence, 1530 residues long: MGTALLQRGGCFLLCLSLLLLGCWAELGSGLEFPGAEGQWTRFPKWNACCESEMSFQLKTRSARGLVLYFDDEGFCDFLELILTRGGRLQLSFSIFCAEPATLLTDTPVNDGAWHNVRIRRQFRNTTLFIDQVEAKWVEVKSKRRDMTVFSGLFVGGLPPELRAAALKLTLASVREREPFKGWIRDVRVNSSLALPVDSGEVKLDDEPPNSGGGSPCEAGEEGEGGVCLNGGVCSVVDDQAVCDCSRTGFRGKDCSQEDNNVEGLAHLMMGDQGKSKEDNNVEGLAHLMMGDQGKEEYIATFKGSEYFCYDLSQNPIQSSSDEITLSFKTLQRNGLMLHTGKSADYVNLALKNGAVSLVINLGSGAFEALVEPVNGKFNDNAWHDVKVTRNLRQTSGIGHAMVNKLHCSVTISVDGILTTTGYTQEDYTMLGSDDFFYVGGSPSTADLPGSPVSNNFMGCLKEVVYKNNDVRLELSRLAKQGDPKMKIHGVVAFKCENVATLDPITFETPESFISLPKWNAKKTGSISFDFRTTEPNGLILFSHGKPRHQKDAKHPQMIKVDFFAIEMLDGHLYLLLDMGSGTIKIKALQKKVNDGEWYHVDFQRDGRSGTISVNTLRTPYTAPGESQILDLDDELYLGGLPENKAGLVFPTEVWTALLNYGYVGCIRDLFIDGQSKDIRQMAEVQSTAGVKPSCSRETAKPCLSNPCKNNGMCRDGWNRYVCDCSGTGYLGRSCEREATVLSYDGSMFMKIQLPVVMHTEAEDVSLRFRSQRAYGILMATTSRDSADTLRLELDAGRVKLTVNLDCIRINCNSSKGPETLFAGYNLNDNEWHTVRVVRRGKSLKLTVDDQQAMTGQMAGDHTRLEFHNIETGIITERRYLSSVPSNFIGHLQSLTFNGMAYIDLCKNGDIDYCELNARFGFRNIIADPVTFKTKSSYVALATLQAYTSMHLFFQFKTTSLDGLILYNSGDGNDFIVVELVKGYLHYVFDLGNGANLIKGSSNKPLNDNQWHNVMISRDTSNLHTVKIDTKITTQITAGARNLDLKSDLYIGGVAKETYKSLPKLVHAKEGFQGCLASVDLNGRLPDLISDALFCNGQIERGCEGPSTTCQEDSCSNQGVCLQQWDGISCDCSMTSFSGPLCNDPGTTYIFSKGGGQITYKWPPNDRPSTRADRLAIGFSTVQKEAVLVRVDSSSGLGDYLELHIHQGKIGVKFNVGTDDIAIEESNAIINDGKYHVVRFTRSGGNATLQVDSWPVIERYPAGNNDNERLAIARQRIPYRLGRVVDEWLLDKGRQLTIFNSQATIIIGGKEQGQPFQGQLSGLYYNGLKVLNMAAENDANIAIVGNVRLVGEVPSSMTTESTATAMQSEMSTSIMETTTTLATSTARRGKPPTKEPVSQTTDDILVASAECPSDDEDIDPCEPSSGGLANPTRAGGREPYPGSAEVIRESSSTTGMVVGIVAAAALCILILLYAMYKYRNRDEGSYHVDESRNYISNSAQSNGAVVKEKQPSSAKSANKNKKNKDKEYYV.

An N-terminal signal peptide occupies residues 1–30 (MGTALLQRGGCFLLCLSLLLLGCWAELGSG). Residues 31–212 (LEFPGAEGQW…KLDDEPPNSG (182 aa)) enclose the Laminin G-like 1 domain. At 31 to 1454 (LEFPGAEGQW…EVIRESSSTT (1424 aa)) the chain is on the extracellular side. Asparagine 125 and asparagine 190 each carry an N-linked (GlcNAc...) asparagine glycan. Residues 199–221 (SGEVKLDDEPPNSGGGSPCEAGE) form a disordered region. The EGF-like 1 domain occupies 213 to 256 (GGSPCEAGEEGEGGVCLNGGVCSVVDDQAVCDCSRTGFRGKDCS). 2 disulfides stabilise this stretch: cysteine 228/cysteine 243 and cysteine 245/cysteine 255. Laminin G-like domains follow at residues 299–496 (IATF…AFKC) and 503–695 (DPIT…KPSC). The Ca(2+) site is built by aspartate 345, leucine 362, and methionine 430. 5 cysteine pairs are disulfide-bonded: cysteine 460-cysteine 496, cysteine 666-cysteine 695, cysteine 703-cysteine 714, cysteine 708-cysteine 723, and cysteine 725-cysteine 735. An EGF-like 2 domain is found at 699-736 (TAKPCLSNPCKNNGMCRDGWNRYVCDCSGTGYLGRSCE). An O-linked (Glc...) serine glycan is attached at serine 705. 2 consecutive Laminin G-like domains span residues 741 to 914 (VLSY…IDYC) and 928 to 1103 (DPVT…ERGC). Aspartate 788 and leucine 805 together coordinate Ca(2+). Asparagine 813 carries N-linked (GlcNAc...) asparagine glycosylation. Arginine 864 contributes to the Ca(2+) binding site. Disulfide bonds link cysteine 906–cysteine 914, cysteine 1075–cysteine 1103, cysteine 1110–cysteine 1121, cysteine 1115–cysteine 1130, and cysteine 1132–cysteine 1142. The EGF-like 3 domain maps to 1106-1143 (PSTTCQEDSCSNQGVCLQQWDGISCDCSMTSFSGPLCN). Positions 1149–1347 (YIFSKGGGQI…DANIAIVGNV (199 aa)) constitute a Laminin G-like 6 domain. Residues aspartate 1199 and valine 1216 each contribute to the Ca(2+) site. Asparagine 1246 carries N-linked (GlcNAc...) asparagine glycosylation. Isoleucine 1298 and asparagine 1300 together coordinate Ca(2+). The O-linked (Xyl...) (heparan sulfate) serine glycan is linked to serine 1408. Positions 1411 to 1443 (CPSDDEDIDPCEPSSGGLANPTRAGGREPYPGS) are disordered. Residues 1455–1475 (GMVVGIVAAAALCILILLYAM) form a helical membrane-spanning segment. Over 1476–1530 (YKYRNRDEGSYHVDESRNYISNSAQSNGAVVKEKQPSSAKSANKNKKNKDKEYYV) the chain is Cytoplasmic. The interaction with CASK stretch occupies residues 1497–1523 (NSAQSNGAVVKEKQPSSAKSANKNKKN). A disordered region spans residues 1497–1530 (NSAQSNGAVVKEKQPSSAKSANKNKKNKDKEYYV).

It belongs to the neurexin family. As to quaternary structure, interacts (via laminin G-like domain 2 and/or laminin G-like domain 6) with NLGN1 forming a heterotetramer, where one NLGN1 dimer interacts with one NRXN1 dimer. Also interacts (via laminin G-like domain 2 and/or laminin G-like domain 6) with NLGN2, NLGN3 and NLGN4L; interactions with NLGN1, NLGN2, NLGN3 and NLGN4L are calcium-dependent. Interacts (via cytoplasmic C-terminal region) with CASK (via the PDZ, SH3 and guanylate kinase-like domains). Interacts (via cytoplasmic C-terminus) with CASKIN1 and APBA1. Interacts (via laminin G-like domain 2) with NXPH1 and NXPH3. Alpha-type isoforms (neurexin-1-alpha) interact (via laminin G-like domain 2 and/or laminin G-like domain 6) with DAG1 (via alpha-dystroglycan chain). Interacts with LRRTM1, LRRTM2, LRRTM3 and LRRTM4. Interacts with SYT13 and SYTL1. Interacts with CBLN1, CBLN2 and, less avidly, with CBLN4. Interacts with CLSTN3. Alpha-type isoforms interact with alpha-latrotoxin from spider venom. In terms of processing, O-glycosylated; contains heparan sulfate. Heparan sulfate attachment is required for synapse development by mediating interactions with neuroligins and LRRTM2.

The protein resides in the presynaptic cell membrane. Cell surface protein involved in cell-cell-interactions, exocytosis of secretory granules and regulation of signal transmission. Function is isoform-specific. Alpha-type isoforms have a long N-terminus with six laminin G-like domains and play an important role in synaptic signal transmission. Alpha-type isoforms play a role in the regulation of calcium channel activity and Ca(2+)-triggered neurotransmitter release at synapses and at neuromuscular junctions. They play an important role in Ca(2+)-triggered exocytosis of secretory granules in pituitary gland. They may affect their functions at synapses and in endocrine cells via their interactions with proteins from the exocytotic machinery. Likewise, alpha-type isoforms play a role in regulating the activity of postsynaptic NMDA receptors, a subtype of glutamate-gated ion channels. Both alpha-type and beta-type isoforms may play a role in the formation or maintenance of synaptic junctions via their interactions (via the extracellular domains) with neuroligin family members, CBLN1 or CBLN2. In vitro, triggers the de novo formation of presynaptic structures. May be involved in specification of excitatory synapses. Alpha-type isoforms were first identified as receptors for alpha-latrotoxin from spider venom. This is Neurexin-1 (NRXN1) from Bos taurus (Bovine).